The primary structure comprises 527 residues: Tyrosine-protein kinase TXK (527 aa).

A disordered region spans residues Thr-58 to Pro-81. Positions Asp-82–Leu-142 constitute an SH3 domain. Position 91 is a phosphotyrosine; by autocatalysis (Tyr-91). In terms of domain architecture, SH2 spans Trp-150 to Ile-246. Positions Leu-271–Trp-527 constitute a Protein kinase domain. Residues Ile-277–Val-285 and Lys-299 contribute to the ATP site. Catalysis depends on Asp-390, which acts as the Proton acceptor. Tyr-420 carries the post-translational modification Phosphotyrosine; by FYN and autocatalysis.

Belongs to the protein kinase superfamily. Tyr protein kinase family. TEC subfamily. Interacts with PARP1 and EEF1A1. Interacts with SH2D2A. Interacts with FYN. Post-translationally, phosphorylated at Tyr-420 by FYN. Autophosphorylation at Tyr-91 is critical for the activation of TXK, leading to the up-regulation of IFN-gamma gene transcription. In terms of processing, the cysteine string at the N-terminus is palmitoylated and required for the proper subcellular location. As to expression, expressed in early thymocytes, T-cells and mast cells.

It localises to the cytoplasm. The protein resides in the nucleus. It is found in the cell membrane. It carries out the reaction L-tyrosyl-[protein] + ATP = O-phospho-L-tyrosyl-[protein] + ADP + H(+). With respect to regulation, activated by phosphorylation by FYN. In terms of biological role, non-receptor tyrosine kinase that plays a redundant role with ITK in regulation of the adaptive immune response. Regulates the development, function and differentiation of conventional T-cells and nonconventional NKT-cells. When antigen presenting cells (APC) activate T-cell receptor (TCR), a series of phosphorylation leads to the recruitment of TXK to the cell membrane, where it is phosphorylated at Tyr-420. Phosphorylation leads to TXK full activation. Also contributes to signaling from many receptors and participates in multiple downstream pathways, including regulation of the actin cytoskeleton. Like ITK, can phosphorylate PLCG1, leading to its localization in lipid rafts and activation, followed by subsequent cleavage of its substrates. In turn, the endoplasmic reticulum releases calcium in the cytoplasm and the nuclear activator of activated T-cells (NFAT) translocates into the nucleus to perform its transcriptional duty. Plays a role in the positive regulation of IFNG transcription in T-helper 1 cells as part of an IFNG promoter-binding complex with PARP1 and EEF1A1. Within the complex, phosphorylates both PARP1 and EEF1A1. Also phosphorylates key sites in LCP2 leading to the up-regulation of Th1 preferred cytokine IL-2. Phosphorylates 'Tyr-201' of CTLA4 which leads to the association of PI-3 kinase with the CTLA4 receptor. In Mus musculus (Mouse), this protein is Tyrosine-protein kinase TXK (Txk).